The sequence spans 134 residues: Phosphoribosyl-AMP cyclohydrolase (134 aa).

Asp80 provides a ligand contact to Mg(2+). Cys81 contributes to the Zn(2+) binding site. Residues Asp82 and Asp84 each contribute to the Mg(2+) site. Zn(2+) is bound by residues Cys98 and Cys105.

Belongs to the PRA-CH family. In terms of assembly, homodimer. It depends on Mg(2+) as a cofactor. Requires Zn(2+) as cofactor.

The protein localises to the cytoplasm. The catalysed reaction is 1-(5-phospho-beta-D-ribosyl)-5'-AMP + H2O = 1-(5-phospho-beta-D-ribosyl)-5-[(5-phospho-beta-D-ribosylamino)methylideneamino]imidazole-4-carboxamide. It participates in amino-acid biosynthesis; L-histidine biosynthesis; L-histidine from 5-phospho-alpha-D-ribose 1-diphosphate: step 3/9. Catalyzes the hydrolysis of the adenine ring of phosphoribosyl-AMP. This chain is Phosphoribosyl-AMP cyclohydrolase, found in Janthinobacterium sp. (strain Marseille) (Minibacterium massiliensis).